A 326-amino-acid polypeptide reads, in one-letter code: ATP synthase gamma chain (326 aa).

The protein belongs to the ATPase gamma chain family. F-type ATPases have 2 components, CF(1) - the catalytic core - and CF(0) - the membrane proton channel. CF(1) has five subunits: alpha(3), beta(3), gamma(1), delta(1), epsilon(1). CF(0) has three main subunits: a, b and c.

It is found in the cell membrane. Its function is as follows. Produces ATP from ADP in the presence of a proton gradient across the membrane. The gamma chain is believed to be important in regulating ATPase activity and the flow of protons through the CF(0) complex. The sequence is that of ATP synthase gamma chain from Rhodococcus jostii (strain RHA1).